The following is a 233-amino-acid chain: Phosphoglycolate phosphatase (233 aa).

The active-site Nucleophile is the aspartate 13. Mg(2+) is bound by residues aspartate 13, aspartate 15, and aspartate 175.

This sequence belongs to the HAD-like hydrolase superfamily. CbbY/CbbZ/Gph/YieH family. It depends on Mg(2+) as a cofactor.

The enzyme catalyses 2-phosphoglycolate + H2O = glycolate + phosphate. It functions in the pathway organic acid metabolism; glycolate biosynthesis; glycolate from 2-phosphoglycolate: step 1/1. Its function is as follows. Specifically catalyzes the dephosphorylation of 2-phosphoglycolate. Is involved in the dissimilation of the intracellular 2-phosphoglycolate formed during the DNA repair of 3'-phosphoglycolate ends, a major class of DNA lesions induced by oxidative stress. This is Phosphoglycolate phosphatase from Agrobacterium fabrum (strain C58 / ATCC 33970) (Agrobacterium tumefaciens (strain C58)).